The chain runs to 311 residues: Lipoyl synthase (311 aa).

Residues cysteine 36, cysteine 41, cysteine 47, cysteine 66, cysteine 70, cysteine 73, and serine 280 each coordinate [4Fe-4S] cluster. The Radical SAM core domain maps to 51–269; the sequence is RDGPGTATFM…RVAESEFGFL (219 aa).

This sequence belongs to the radical SAM superfamily. Lipoyl synthase family. [4Fe-4S] cluster serves as cofactor.

The protein localises to the cytoplasm. It carries out the reaction [[Fe-S] cluster scaffold protein carrying a second [4Fe-4S](2+) cluster] + N(6)-octanoyl-L-lysyl-[protein] + 2 oxidized [2Fe-2S]-[ferredoxin] + 2 S-adenosyl-L-methionine + 4 H(+) = [[Fe-S] cluster scaffold protein] + N(6)-[(R)-dihydrolipoyl]-L-lysyl-[protein] + 4 Fe(3+) + 2 hydrogen sulfide + 2 5'-deoxyadenosine + 2 L-methionine + 2 reduced [2Fe-2S]-[ferredoxin]. The protein operates within protein modification; protein lipoylation via endogenous pathway; protein N(6)-(lipoyl)lysine from octanoyl-[acyl-carrier-protein]: step 2/2. Functionally, catalyzes the radical-mediated insertion of two sulfur atoms into the C-6 and C-8 positions of the octanoyl moiety bound to the lipoyl domains of lipoate-dependent enzymes, thereby converting the octanoylated domains into lipoylated derivatives. The chain is Lipoyl synthase from Halobacterium salinarum (strain ATCC 29341 / DSM 671 / R1).